A 271-amino-acid chain; its full sequence is Cobalt import ATP-binding protein CbiO (271 aa).

The 235-residue stretch at 2-236 (LATSDLWFRY…TEAMEHAGLT (235 aa)) folds into the ABC transporter domain. ATP is bound at residue 34-41 (GANGCGKS).

This sequence belongs to the ABC transporter superfamily. Cobalt importer (TC 3.A.1.18.1) family. In terms of assembly, forms an energy-coupling factor (ECF) transporter complex composed of an ATP-binding protein (A component, CbiO), a transmembrane protein (T component, CbiQ) and 2 possible substrate-capture proteins (S components, CbiM and CbiN) of unknown stoichimetry.

The protein resides in the cell inner membrane. It functions in the pathway cofactor biosynthesis; adenosylcobalamin biosynthesis. Part of the energy-coupling factor (ECF) transporter complex CbiMNOQ involved in cobalt import. Presumably responsible for energy coupling to the transport system. The sequence is that of Cobalt import ATP-binding protein CbiO from Salmonella paratyphi A (strain ATCC 9150 / SARB42).